A 111-amino-acid polypeptide reads, in one-letter code: Large ribosomal subunit protein uL22 (111 aa).

The protein belongs to the universal ribosomal protein uL22 family. Part of the 50S ribosomal subunit.

In terms of biological role, this protein binds specifically to 23S rRNA; its binding is stimulated by other ribosomal proteins, e.g. L4, L17, and L20. It is important during the early stages of 50S assembly. It makes multiple contacts with different domains of the 23S rRNA in the assembled 50S subunit and ribosome. Its function is as follows. The globular domain of the protein is located near the polypeptide exit tunnel on the outside of the subunit, while an extended beta-hairpin is found that lines the wall of the exit tunnel in the center of the 70S ribosome. The protein is Large ribosomal subunit protein uL22 of Chlamydia trachomatis serovar A (strain ATCC VR-571B / DSM 19440 / HAR-13).